Consider the following 372-residue polypeptide: Glutamate 5-kinase (372 aa).

K14 lines the ATP pocket. Residues S54, D141, and N153 each coordinate substrate. 173–174 (TD) serves as a coordination point for ATP. A PUA domain is found at 280-358 (RGHVVIDAGA…GEIEAVLGYM (79 aa)).

Belongs to the glutamate 5-kinase family.

The protein resides in the cytoplasm. It carries out the reaction L-glutamate + ATP = L-glutamyl 5-phosphate + ADP. It participates in amino-acid biosynthesis; L-proline biosynthesis; L-glutamate 5-semialdehyde from L-glutamate: step 1/2. Its function is as follows. Catalyzes the transfer of a phosphate group to glutamate to form L-glutamate 5-phosphate. The sequence is that of Glutamate 5-kinase from Burkholderia thailandensis (strain ATCC 700388 / DSM 13276 / CCUG 48851 / CIP 106301 / E264).